A 714-amino-acid polypeptide reads, in one-letter code: Polyribonucleotide nucleotidyltransferase (714 aa).

Mg(2+)-binding residues include D493 and D499. The 60-residue stretch at 559–618 (PRIETTKIPADRIGELIGPGGKNIKAIQAESGADINIEEDGTVHIYAAKQEGLDRALELV) folds into the KH domain. In terms of domain architecture, S1 motif spans 628-696 (GELYTGKIVS…DKGRVKMSIR (69 aa)).

Belongs to the polyribonucleotide nucleotidyltransferase family. It depends on Mg(2+) as a cofactor.

It is found in the cytoplasm. The catalysed reaction is RNA(n+1) + phosphate = RNA(n) + a ribonucleoside 5'-diphosphate. Its function is as follows. Involved in mRNA degradation. Catalyzes the phosphorolysis of single-stranded polyribonucleotides processively in the 3'- to 5'-direction. This is Polyribonucleotide nucleotidyltransferase from Akkermansia muciniphila (strain ATCC BAA-835 / DSM 22959 / JCM 33894 / BCRC 81048 / CCUG 64013 / CIP 107961 / Muc).